The following is a 208-amino-acid chain: dITP/XTP pyrophosphatase (208 aa).

A substrate-binding site is contributed by 11–16; sequence SRNWKK. The active-site Proton acceptor is the Asp76. Asp76 contacts Mg(2+). Substrate contacts are provided by residues Ser77, 158-161, Lys184, and 189-190; these read FGYD and HR.

This sequence belongs to the HAM1 NTPase family. In terms of assembly, homodimer. Mg(2+) is required as a cofactor.

The catalysed reaction is XTP + H2O = XMP + diphosphate + H(+). The enzyme catalyses dITP + H2O = dIMP + diphosphate + H(+). It carries out the reaction ITP + H2O = IMP + diphosphate + H(+). Pyrophosphatase that catalyzes the hydrolysis of nucleoside triphosphates to their monophosphate derivatives, with a high preference for the non-canonical purine nucleotides XTP (xanthosine triphosphate), dITP (deoxyinosine triphosphate) and ITP. Seems to function as a house-cleaning enzyme that removes non-canonical purine nucleotides from the nucleotide pool, thus preventing their incorporation into DNA/RNA and avoiding chromosomal lesions. The chain is dITP/XTP pyrophosphatase from Mycobacterium leprae (strain TN).